Consider the following 99-residue polypeptide: uncharacterized protein (99 aa).

One can recognise a TM2 domain in the interval 32–79 (KKSVGIAVLLSFIIPGAGQMYLGRVGKGIILLLTCWLIIPWIYSIYDA). 2 consecutive transmembrane segments (helical) span residues 34-54 (SVGIAVLLSFIIPGAGQMYLG) and 56-76 (VGKGIILLLTCWLIIPWIYSI).

It localises to the cell membrane. This is an uncharacterized protein from Methanocaldococcus jannaschii (strain ATCC 43067 / DSM 2661 / JAL-1 / JCM 10045 / NBRC 100440) (Methanococcus jannaschii).